Consider the following 607-residue polypeptide: MNKEERAKRQSKIRNFSIIAHIDHGKSTLADRILEKTNALTQREMKAQLLDSMDLERERGITIKLNAVQLNYKAKDGEEYILHLIDTPGHVDFTYEVSRSLAACEGAILVVDAAQGIEAQTLANVYLALDNNLEILPVINKIDLPSADPERVRQEVEDVIGLDASEAVLASAKAGIGIEEILEQIVEKVPAPTGDSEEPLQCMIFDSLYDPYRGVIAYIRVVNGTVKVGDKVRMMATGKEFEVTEVGVFTPKTTQRDELTVGDVGFLAASIKNVGDTRVGDTITHAKRPAAEPLAGYRKLNPMVFCGLYPIDSARYNDLRDALEKLELNDSALEFEPETSQALGFGFRCGFLGLLHMEIIQERIEREFKIDLITTAPSVIYKVFLTNGEDMIVDNPSNMPDPQTIDRVEEPFVKAAIMVPNDYVGAVMEICQGKRGTFIDMQYLDETRVTLTYEIPLSEIVYDFFDQLKSNTKGYASFDYELIGYKPSKLVKMDILLNSEQVDALSFIVHRDSAYDRGKVIVEKLKELIPRQQFEVPIQATIGNKVVARSTIKAMRKNVLAKCYGGDISRKRKLLDKQKEGKKRMKSVGSVEVPQEAFMAVLKMDDN.

In terms of domain architecture, tr-type G spans S11 to T193. GTP-binding positions include D23–T28 and N140–D143.

It belongs to the TRAFAC class translation factor GTPase superfamily. Classic translation factor GTPase family. LepA subfamily.

It is found in the cell membrane. It catalyses the reaction GTP + H2O = GDP + phosphate + H(+). In terms of biological role, required for accurate and efficient protein synthesis under certain stress conditions. May act as a fidelity factor of the translation reaction, by catalyzing a one-codon backward translocation of tRNAs on improperly translocated ribosomes. Back-translocation proceeds from a post-translocation (POST) complex to a pre-translocation (PRE) complex, thus giving elongation factor G a second chance to translocate the tRNAs correctly. Binds to ribosomes in a GTP-dependent manner. The polypeptide is Elongation factor 4 (Bacillus cereus (strain AH820)).